The sequence spans 569 residues: AP-4 complex accessory subunit Tepsin (569 aa).

The ENTH domain maps to 8–141; it reads RDRLSFLHRL…FSDALPQPPS (134 aa). The segment at 196-298 is disordered; it reads VRPGPDNPCT…SGASREPGDL (103 aa). Positions 219-229 are enriched in polar residues; sequence VTPSASHTHPN. Low complexity predominate over residues 260–292; that stretch reads SSPSSQNSSCTSNLSRASDSVSRSGSDSHSGAS. The residue at position 400 (S400) is a Phosphoserine. Residues 467 to 524 are disordered; sequence VPRSPVPTPSPDTLPPALQDPGELRTQLVCSSEPGTGSEQRLENTDTPKDSSSPCPWS. The segment covering 470 to 480 has biased composition (pro residues); sequence SPVPTPSPDTL. Positions 494–505 are enriched in polar residues; the sequence is LVCSSEPGTGSE. Over residues 506–515 the composition is skewed to basic and acidic residues; it reads QRLENTDTPK. The interval 525–535 is interaction with AP4B1; sequence PNSLFAGMELV. The segment at 559–569 is interaction with AP4E1; that stretch reads SEPSAFAFLNM.

In terms of assembly, interacts with AP4B1 and AP4E1; the interaction is direct and mediates the association of TEPSIN with the adapter-like complex 4 (AP-4), a heterotetramer composed of AP4B1, AP4E1, AP4M1 and AP4S1.

The protein localises to the golgi apparatus. It is found in the trans-Golgi network membrane. Its subcellular location is the cytoplasmic vesicle. The protein resides in the cytoplasm. It localises to the cytosol. In terms of biological role, associates with the adapter-like complex 4 (AP-4) and may therefore play a role in vesicular trafficking of proteins at the trans-Golgi network. The chain is AP-4 complex accessory subunit Tepsin from Rattus norvegicus (Rat).